The chain runs to 258 residues: Countin-1 (258 aa).

An N-terminal signal peptide occupies residues 1–21 (MNKLFSLILALFLVNSAVVSS). Positions 22 to 106 (LDSCSICVDF…EKISVCKTND (85 aa)) constitute a Saposin B-type domain. 3 disulfides stabilise this stretch: cysteine 25/cysteine 102, cysteine 28/cysteine 96, and cysteine 56/cysteine 69. Residues asparagine 121 and asparagine 215 are each glycosylated (N-linked (GlcNAc...) asparagine). The span at 233 to 248 (AGSFSGSSQSTQTGAA) shows a compositional bias: low complexity. Residues 233-258 (AGSFSGSSQSTQTGAASGSGSGFALF) are disordered. Residues 249 to 258 (SGSGSGFALF) are compositionally biased toward gly residues.

This sequence belongs to the countin family. Component of the counting factor (CF) complex, which includes cf60, cf50, cf45-1 and ctnA.

Its subcellular location is the secreted. In terms of biological role, cell-counting factor that limits the maximum size of the multicellular structure. May down-regulate the expression of gp24, which mediates cell adhesion. The sequence is that of Countin-1 (ctnA) from Dictyostelium discoideum (Social amoeba).